Reading from the N-terminus, the 69-residue chain is Amphipathic peptide StCT2 (69 aa).

The signal sequence occupies residues 1-23; sequence MKTQFAVLIISMILMQMLVQTEA. Isoleucine amide is present on I37. Residues 41–69 constitute a propeptide that is removed on maturation; sequence SLRNQDQFDNMFDSDLSDADLKLLDDLFD.

The protein belongs to the non-disulfide-bridged peptide (NDBP) superfamily. Short antimicrobial peptide (group 4) family. Expressed by the venom gland.

It is found in the secreted. Its subcellular location is the target cell membrane. Functionally, antimicrobial peptide that is rapidly bactericidal against Gram-positive bacteria. This Scorpiops tibetanus (Scorpion) protein is Amphipathic peptide StCT2.